We begin with the raw amino-acid sequence, 461 residues long: V-type ATP synthase beta chain (461 aa).

Belongs to the ATPase alpha/beta chains family.

In terms of biological role, produces ATP from ADP in the presence of a proton gradient across the membrane. The V-type beta chain is a regulatory subunit. The polypeptide is V-type ATP synthase beta chain (Clostridium botulinum (strain 657 / Type Ba4)).